A 187-amino-acid polypeptide reads, in one-letter code: Elongation factor P (187 aa).

The protein belongs to the elongation factor P family.

It is found in the cytoplasm. Its pathway is protein biosynthesis; polypeptide chain elongation. Functionally, involved in peptide bond synthesis. Stimulates efficient translation and peptide-bond synthesis on native or reconstituted 70S ribosomes in vitro. Probably functions indirectly by altering the affinity of the ribosome for aminoacyl-tRNA, thus increasing their reactivity as acceptors for peptidyl transferase. This is Elongation factor P from Helicobacter hepaticus (strain ATCC 51449 / 3B1).